We begin with the raw amino-acid sequence, 117 residues long: Biogenesis of lysosome-related organelles complex 1 subunit BLS1 (117 aa).

The interval 97–117 (EGKAQDTEQAPGKGDRIFRSD) is disordered.

This sequence belongs to the BLOC1S1 family. As to quaternary structure, component of the biogenesis of lysosome-related organelles complex-1 (BLOC-1).

Its subcellular location is the endosome. Component of the biogenesis of lysosome-related organelles complex-1 (BLOC-1), a complex involved in endosomal cargo sorting. The polypeptide is Biogenesis of lysosome-related organelles complex 1 subunit BLS1 (BLS1) (Eremothecium gossypii (strain ATCC 10895 / CBS 109.51 / FGSC 9923 / NRRL Y-1056) (Yeast)).